The chain runs to 117 residues: MYIYVEVCTHVHAQATDATRPGIHICTYIYAHIYIYIYVYVNVYIQLVISRAEWAEKHSIVEKKREEKGRGAIAMDVVEYREGQAVVQWMRFEAQRKGGASKHRTLSAETGIRGEGE.

Positions 96–117 (RKGGASKHRTLSAETGIRGEGE) are disordered.

This is an uncharacterized protein from Saccharomyces cerevisiae (strain ATCC 204508 / S288c) (Baker's yeast).